The following is a 93-amino-acid chain: HIG1 domain family member 1A, mitochondrial (93 aa).

The 93-residue stretch at 1–93 (MSTDTGVSLP…YREFWAKPKP (93 aa)) folds into the HIG1 domain. Ser2 bears the N-acetylserine mark. At Ser8 the chain carries Phosphoserine. 2 consecutive transmembrane segments (helical) span residues 26–46 (EAPF…YGLY) and 60–80 (LIHM…VGMG).

In terms of assembly, associates with cytochrome c oxidase (COX, complex IV); proposed complex component. Also associates with respiratory chain supercomplexes.

It localises to the mitochondrion membrane. Its subcellular location is the mitochondrion inner membrane. In terms of biological role, proposed subunit of cytochrome c oxidase (COX, complex IV), which is the terminal component of the mitochondrial respiratory chain that catalyzes the reduction of oxygen to water. May play a role in the assembly of respiratory supercomplexes. The chain is HIG1 domain family member 1A, mitochondrial (HIGD1A) from Homo sapiens (Human).